A 207-amino-acid chain; its full sequence is Vascular endothelial growth factor B (207 aa).

An N-terminal signal peptide occupies residues 1 to 21 (MSPLLRRLLLAVLLQLAPAQA). 3 disulfide bridges follow: Cys47–Cys89, Cys78–Cys122, and Cys82–Cys124. The segment covering 124-139 (CRPKKRESAVKPDRAS) has biased composition (basic and acidic residues). Residues 124 to 207 (CRPKKRESAV…AASSVVKGGA (84 aa)) are disordered. A compositionally biased stretch (low complexity) spans 174–201 (PSAHAAPSAASALTPGPATAAADAAASS).

Belongs to the PDGF/VEGF growth factor family. In terms of assembly, homodimer; disulfide-linked. Can also form heterodimer with VEGF. Post-translationally, VEGF-B186 is O-glycosylated.

It localises to the secreted. Its function is as follows. Growth factor for endothelial cells. VEGF-B167 binds heparin and neuropilin-1 whereas the binding to neuropilin-1 of VEGF-B186 is regulated by proteolysis. This Bos taurus (Bovine) protein is Vascular endothelial growth factor B (VEGFB).